The following is a 399-amino-acid chain: Phosphoglycerate kinase (399 aa).

Substrate contacts are provided by residues 22 to 24 (DLN), R37, 60 to 63 (HFGR), R119, and R152. Residues K202, E324, and 354–357 (GGDT) contribute to the ATP site.

Belongs to the phosphoglycerate kinase family. As to quaternary structure, monomer.

Its subcellular location is the cytoplasm. The enzyme catalyses (2R)-3-phosphoglycerate + ATP = (2R)-3-phospho-glyceroyl phosphate + ADP. It participates in carbohydrate degradation; glycolysis; pyruvate from D-glyceraldehyde 3-phosphate: step 2/5. The sequence is that of Phosphoglycerate kinase from Sinorhizobium medicae (strain WSM419) (Ensifer medicae).